Here is a 329-residue protein sequence, read N- to C-terminus: Biotin synthase (329 aa).

The Radical SAM core domain occupies 46-275 (YYGNKVKLNM…TKEIRISGGR (230 aa)). 3 residues coordinate [4Fe-4S] cluster: Cys-64, Cys-68, and Cys-71. Residues Cys-108, Cys-140, Cys-200, and Arg-270 each contribute to the [2Fe-2S] cluster site.

It belongs to the radical SAM superfamily. Biotin synthase family. As to quaternary structure, homodimer. [4Fe-4S] cluster serves as cofactor. The cofactor is [2Fe-2S] cluster.

The enzyme catalyses (4R,5S)-dethiobiotin + (sulfur carrier)-SH + 2 reduced [2Fe-2S]-[ferredoxin] + 2 S-adenosyl-L-methionine = (sulfur carrier)-H + biotin + 2 5'-deoxyadenosine + 2 L-methionine + 2 oxidized [2Fe-2S]-[ferredoxin]. It participates in cofactor biosynthesis; biotin biosynthesis; biotin from 7,8-diaminononanoate: step 2/2. Its function is as follows. Catalyzes the conversion of dethiobiotin (DTB) to biotin by the insertion of a sulfur atom into dethiobiotin via a radical-based mechanism. This is Biotin synthase from Anoxybacillus flavithermus (strain DSM 21510 / WK1).